A 227-amino-acid polypeptide reads, in one-letter code: ATP-dependent dethiobiotin synthetase BioD (227 aa).

13–18 (DVGKTV) contacts ATP. Thr17 is a Mg(2+) binding site. Lys38 is a catalytic residue. ATP is bound by residues Asp55, 116 to 119 (EGAG), 176 to 177 (NR), and 205 to 207 (PYI). Mg(2+)-binding residues include Asp55 and Glu116.

The protein belongs to the dethiobiotin synthetase family. Homodimer. Requires Mg(2+) as cofactor.

The protein resides in the cytoplasm. The enzyme catalyses (7R,8S)-7,8-diammoniononanoate + CO2 + ATP = (4R,5S)-dethiobiotin + ADP + phosphate + 3 H(+). The protein operates within cofactor biosynthesis; biotin biosynthesis; biotin from 7,8-diaminononanoate: step 1/2. Functionally, catalyzes a mechanistically unusual reaction, the ATP-dependent insertion of CO2 between the N7 and N8 nitrogen atoms of 7,8-diaminopelargonic acid (DAPA, also called 7,8-diammoniononanoate) to form a ureido ring. This chain is ATP-dependent dethiobiotin synthetase BioD, found in Vibrio campbellii (strain ATCC BAA-1116).